We begin with the raw amino-acid sequence, 944 residues long: Isoleucine--tRNA ligase (944 aa).

The 'HIGH' region signature appears at 58–68 (PYANGDIHIGH). Glu-568 is an L-isoleucyl-5'-AMP binding site. A 'KMSKS' region motif is present at residues 609 to 613 (KMSKS). Lys-612 contributes to the ATP binding site. The Zn(2+) site is built by Cys-907, Cys-910, Cys-927, and Cys-930.

The protein belongs to the class-I aminoacyl-tRNA synthetase family. IleS type 1 subfamily. In terms of assembly, monomer. Requires Zn(2+) as cofactor.

The protein resides in the cytoplasm. It catalyses the reaction tRNA(Ile) + L-isoleucine + ATP = L-isoleucyl-tRNA(Ile) + AMP + diphosphate. Catalyzes the attachment of isoleucine to tRNA(Ile). As IleRS can inadvertently accommodate and process structurally similar amino acids such as valine, to avoid such errors it has two additional distinct tRNA(Ile)-dependent editing activities. One activity is designated as 'pretransfer' editing and involves the hydrolysis of activated Val-AMP. The other activity is designated 'posttransfer' editing and involves deacylation of mischarged Val-tRNA(Ile). The chain is Isoleucine--tRNA ligase from Psychromonas ingrahamii (strain DSM 17664 / CCUG 51855 / 37).